We begin with the raw amino-acid sequence, 513 residues long: Probable cytosol aminopeptidase (513 aa).

Mn(2+)-binding residues include Lys-277 and Asp-282. Lys-289 is a catalytic residue. Residues Asp-300, Asp-359, and Glu-361 each coordinate Mn(2+). Arg-363 is an active-site residue.

It belongs to the peptidase M17 family. It depends on Mn(2+) as a cofactor.

Its subcellular location is the cytoplasm. It catalyses the reaction Release of an N-terminal amino acid, Xaa-|-Yaa-, in which Xaa is preferably Leu, but may be other amino acids including Pro although not Arg or Lys, and Yaa may be Pro. Amino acid amides and methyl esters are also readily hydrolyzed, but rates on arylamides are exceedingly low.. The catalysed reaction is Release of an N-terminal amino acid, preferentially leucine, but not glutamic or aspartic acids.. Functionally, presumably involved in the processing and regular turnover of intracellular proteins. Catalyzes the removal of unsubstituted N-terminal amino acids from various peptides. This chain is Probable cytosol aminopeptidase, found in Mycobacterium sp. (strain KMS).